Reading from the N-terminus, the 112-residue chain is MCSPSETKTSVIDQLKRAASAEEFFTTLGVDYDPQVVNVARLHILKRMGQYLASEDLAGLSNCAVTERCKAVLERAYADFVASSPLDQRVFKVLKDAVSPKRGAFVPLDALK.

This sequence belongs to the NifW family. As to quaternary structure, homotrimer; associates with NifD.

In terms of biological role, may protect the nitrogenase Fe-Mo protein from oxidative damage. This Rhodopseudomonas palustris (strain BisA53) protein is Nitrogenase-stabilizing/protective protein NifW.